The following is a 192-amino-acid chain: Xanthine phosphoribosyltransferase (192 aa).

Xanthine contacts are provided by leucine 20 and asparagine 27. A 5-phospho-alpha-D-ribose 1-diphosphate-binding site is contributed by alanine 128–alanine 132. Lysine 156 lines the xanthine pocket.

The protein belongs to the purine/pyrimidine phosphoribosyltransferase family. Xpt subfamily. Homodimer.

The protein localises to the cytoplasm. It catalyses the reaction XMP + diphosphate = xanthine + 5-phospho-alpha-D-ribose 1-diphosphate. It participates in purine metabolism; XMP biosynthesis via salvage pathway; XMP from xanthine: step 1/1. In terms of biological role, converts the preformed base xanthine, a product of nucleic acid breakdown, to xanthosine 5'-monophosphate (XMP), so it can be reused for RNA or DNA synthesis. This Lactobacillus helveticus (strain DPC 4571) protein is Xanthine phosphoribosyltransferase.